The sequence spans 451 residues: Mannan endo-1,6-alpha-mannosidase DCW1 (451 aa).

A signal peptide spans 1 to 21; sequence MLAVTFTAAAVLSLLAASGRT. 6 N-linked (GlcNAc...) asparagine glycosylation sites follow: N84, N109, N203, N242, N267, and N291. Positions 397–419 are disordered; sequence AMNGGTSPGDPAAGTKTKAENLP. D427 carries the GPI-anchor amidated aspartate lipid modification. A propeptide spans 428–451 (removed in mature form); that stretch reads RAGAGIITALIGSSFLACTLWLII.

The protein belongs to the glycosyl hydrolase 76 family.

It localises to the secreted. It is found in the cell wall. Its subcellular location is the cell membrane. The enzyme catalyses Random hydrolysis of (1-&gt;6)-alpha-D-mannosidic linkages in unbranched (1-&gt;6)-mannans.. Functionally, required for normal synthesis of the cell wall. The polypeptide is Mannan endo-1,6-alpha-mannosidase DCW1 (DCW1) (Eremothecium gossypii (strain ATCC 10895 / CBS 109.51 / FGSC 9923 / NRRL Y-1056) (Yeast)).